Here is a 296-residue protein sequence, read N- to C-terminus: MARDARKRTSSNFPQLPPAPDDYPTFPDTSTWPVVFPELPAAPYGGPCRPPQHTSKAAAPRIPADRLPNHVAIVMDGNGRWATQRGLARTEGHKMGEAVVIDIACGAIELGIKWLSLYAFSTENWKRSPEEVRFLMGFNRDVVRRRRDTLKKLGVRIRWVGSRPRLWRSVINELAVAEEMTKSNDVITINYCVNYGGRTEITEATREIAREVAAGRLNPERITESTIARHLQRPDIPDVDLFLRTSGEQRSSNFMLWQAAYAEYIFQDKLWPDYDRRDLWAACEEYASRTRRFGSA.

A disordered region spans residues 1–24; it reads MARDARKRTSSNFPQLPPAPDDYP. The active site involves Asp-76. Asp-76 provides a ligand contact to Mg(2+). Residues 76–80, Trp-81, Arg-89, His-93, 121–124, Trp-125, Arg-127, Arg-168, Arg-244, and 250–252 each bind substrate; these read DGNGR, STEN, and RSS. Asn-124 acts as the Proton acceptor in catalysis. Glu-263 is a binding site for Mg(2+). 292 to 294 is a substrate binding site; that stretch reads RFG.

It belongs to the UPP synthase family. As to quaternary structure, homodimer. Mg(2+) serves as cofactor. It depends on Mn(2+) as a cofactor.

The protein resides in the cell membrane. It catalyses the reaction (2Z,6E)-farnesyl diphosphate + 7 isopentenyl diphosphate = (2Z,6Z,10Z,14Z,18Z,22Z,26Z,30Z,34E)-decaprenyl diphosphate + 7 diphosphate. The catalysed reaction is n isopentenyl diphosphate + (2E,6E)-farnesyl diphosphate = a di-trans,poly-cis-polyprenyl diphosphate + n diphosphate. Its activity is regulated as follows. Activated by dithiothreitol and inhibited by EDTA. Functionally, catalyzes the sequential condensation of isopentenyl diphosphate (IPP) in the cis configuration with (2Z,6E)-farnesyl diphosphate (Z-FPP or EZ-FPP) generating the 50 carbon product trans,polycis-decaprenyl diphosphate. When (2E,6E)-farnesyl diphosphate (E-FPP or EE-FPP) is used in vitro, both primary products decaprenyl diphosphate and (2E,6E,10E)-geranylgeranyl diphosphate (EEE-GGPP) are synthesized. M.tuberculosis does not synthesize (2E,6E,10Z)-geranylgeranyl diphosphate (EEZ-GGPP) and heptaprenyl diphosphate. Can also accept many different allylic substrates, including E-geranyl diphosphate (E-GPP), neryl diphosphate (NPP), and all-trans-geranyl-geranyl diphosphate. The sequence is that of Decaprenyl diphosphate synthase (uppS) from Mycobacterium tuberculosis (strain ATCC 25618 / H37Rv).